The primary structure comprises 390 residues: Cyclic amide hydrolase (390 aa).

The tract at residues methionine 1 to aspartate 118 is RU A. Substrate-binding positions include arginine 66 and serine 97–glycine 98. The tract at residues glycine 127–alanine 268 is RU B. Lysine 177 is a catalytic residue. Residues asparagine 213, serine 251–serine 252, lysine 346, and serine 365–glycine 366 contribute to the substrate site. Serine 251 functions as the Nucleophile in the catalytic mechanism. An RU C region spans residues leucine 274–alanine 390.

This sequence belongs to the cyclic amide hydrolase (CyAH) family. Homotetramer; disulfide-linked. The disulfide forms between 2 monomers in the tetramer, such that each tetramer contains 2 sets of vicinal disulfides.

Cyclic amide hydrolase of unknown substrate specificity. Catalyzes the hydrolytic ring-opening of a cyclic amide. Does not act on cyanuric acid nor barbituric acid. The polypeptide is Cyclic amide hydrolase (Pseudofrankia inefficax (strain DSM 45817 / CECT 9037 / DDB 130130 / EuI1c) (Frankia inefficax)).